Reading from the N-terminus, the 270-residue chain is 3-methyl-2-oxobutanoate hydroxymethyltransferase (270 aa).

Residues D50 and D89 each contribute to the Mg(2+) site. Residues 50–51 (DS), D89, and K118 contribute to the 3-methyl-2-oxobutanoate site. Mg(2+) is bound at residue E120. The active-site Proton acceptor is E187.

Belongs to the PanB family. Homodecamer; pentamer of dimers. The cofactor is Mg(2+).

Its subcellular location is the cytoplasm. It carries out the reaction 3-methyl-2-oxobutanoate + (6R)-5,10-methylene-5,6,7,8-tetrahydrofolate + H2O = 2-dehydropantoate + (6S)-5,6,7,8-tetrahydrofolate. It functions in the pathway cofactor biosynthesis; (R)-pantothenate biosynthesis; (R)-pantoate from 3-methyl-2-oxobutanoate: step 1/2. Catalyzes the reversible reaction in which hydroxymethyl group from 5,10-methylenetetrahydrofolate is transferred onto alpha-ketoisovalerate to form ketopantoate. This Helicobacter pylori (strain Shi470) protein is 3-methyl-2-oxobutanoate hydroxymethyltransferase.